Here is a 353-residue protein sequence, read N- to C-terminus: Histidine biosynthesis bifunctional protein HisB (353 aa).

The segment at 1–164 (MKNKILFIDR…HITKYIIKHN (164 aa)) is histidinol-phosphatase. The Nucleophile role is filled by Asp9. The Mg(2+) site is built by Asp9 and Asp11. Asp11 acts as the Proton donor in catalysis. Zn(2+) contacts are provided by Cys93, His95, Cys101, and Cys103. Asp128 is a binding site for Mg(2+). The segment at 165–353 (RYAEIIRRTK…NMLPTSKGIL (189 aa)) is imidazoleglycerol-phosphate dehydratase.

The protein in the N-terminal section; belongs to the histidinol-phosphatase family. In the C-terminal section; belongs to the imidazoleglycerol-phosphate dehydratase family. Mg(2+) is required as a cofactor. Requires Zn(2+) as cofactor.

It localises to the cytoplasm. It catalyses the reaction D-erythro-1-(imidazol-4-yl)glycerol 3-phosphate = 3-(imidazol-4-yl)-2-oxopropyl phosphate + H2O. The enzyme catalyses L-histidinol phosphate + H2O = L-histidinol + phosphate. It functions in the pathway amino-acid biosynthesis; L-histidine biosynthesis; L-histidine from 5-phospho-alpha-D-ribose 1-diphosphate: step 6/9. The protein operates within amino-acid biosynthesis; L-histidine biosynthesis; L-histidine from 5-phospho-alpha-D-ribose 1-diphosphate: step 8/9. This is Histidine biosynthesis bifunctional protein HisB from Buchnera aphidicola subsp. Acyrthosiphon pisum (strain Tuc7).